Reading from the N-terminus, the 363-residue chain is uncharacterized protein (363 aa).

4 helical membrane-spanning segments follow: residues 34 to 54, 60 to 80, 91 to 111, and 112 to 132; these read YVYD…IILW, LALF…TLLV, EIAD…TAAG, and LMFS…PLFL. The segment covering 232-245 has biased composition (polar residues); the sequence is SSTTTHSTDSEQIL. The interval 232-363 is disordered; that stretch reads SSTTTHSTDS…SSQKKKPSRK (132 aa). 2 stretches are compositionally biased toward low complexity: residues 246–268 and 275–285; these read TSVS…TPPN and DSNSSDSSSSS. Basic and acidic residues predominate over residues 322–342; sequence SRSERNAQHHRNKDQEQRQDS.

The protein belongs to the chlamydial CPn_0443/CT_005/TC_0273 family.

The protein localises to the cell membrane. This is an uncharacterized protein from Chlamydia trachomatis serovar D (strain ATCC VR-885 / DSM 19411 / UW-3/Cx).